A 146-amino-acid chain; its full sequence is Large ribosomal subunit protein bL19 (146 aa).

Positions 119 to 146 are disordered; that stretch reads DYRKKGEKGVEKVETTPVSADIETQVAE.

This sequence belongs to the bacterial ribosomal protein bL19 family.

Functionally, this protein is located at the 30S-50S ribosomal subunit interface and may play a role in the structure and function of the aminoacyl-tRNA binding site. The sequence is that of Large ribosomal subunit protein bL19 from Bartonella tribocorum (strain CIP 105476 / IBS 506).